We begin with the raw amino-acid sequence, 205 residues long: Molybdenum cofactor guanylyltransferase (205 aa).

GTP-binding positions include Leu-14–Gly-16, Lys-27, Asp-77, and Asp-107. Asp-107 contacts Mg(2+).

The protein belongs to the MobA family. In terms of assembly, monomer. Mg(2+) is required as a cofactor.

It is found in the cytoplasm. It carries out the reaction Mo-molybdopterin + GTP + H(+) = Mo-molybdopterin guanine dinucleotide + diphosphate. In terms of biological role, transfers a GMP moiety from GTP to Mo-molybdopterin (Mo-MPT) cofactor (Moco or molybdenum cofactor) to form Mo-molybdopterin guanine dinucleotide (Mo-MGD) cofactor. The chain is Molybdenum cofactor guanylyltransferase from Burkholderia ambifaria (strain MC40-6).